The following is a 285-amino-acid chain: Transmembrane protein DDB_G0269096 (285 aa).

Disordered stretches follow at residues 1–25 (MEDR…MSQS) and 59–87 (SFEN…NNKN). 2 stretches are compositionally biased toward low complexity: residues 12-25 (SDIS…MSQS) and 65-85 (NNNN…NNNN). The next 5 helical transmembrane spans lie at 124–144 (LEEI…LALI), 152–172 (AQMQ…FGVP), 182–202 (LIMG…ALVY), 205–225 (ANFE…MQFT), and 250–270 (FYFI…TALV).

The protein resides in the membrane. The chain is Transmembrane protein DDB_G0269096 from Dictyostelium discoideum (Social amoeba).